A 306-amino-acid chain; its full sequence is Beta-lactamase 1 (306 aa).

The signal sequence occupies residues 1-27; that stretch reads MILKNKRMLKIGICVGILGLSITSLEA. Catalysis depends on Ser-91, which acts as the Acyl-ester intermediate. Glu-187 (proton acceptor) is an active-site residue. Position 253-255 (253-255) interacts with substrate; it reads KSG.

This sequence belongs to the class-A beta-lactamase family.

It carries out the reaction a beta-lactam + H2O = a substituted beta-amino acid. Its function is as follows. This protein is a beta-lactamase with a substrate specificity for penicillins. This chain is Beta-lactamase 1 (blaY), found in Bacillus cereus.